The following is a 507-amino-acid chain: Histidine ammonia-lyase (507 aa).

Residues 141-143 (ASG) constitute a cross-link (5-imidazolinone (Ala-Gly)). Serine 142 is subject to 2,3-didehydroalanine (Ser).

The protein belongs to the PAL/histidase family. Post-translationally, contains an active site 4-methylidene-imidazol-5-one (MIO), which is formed autocatalytically by cyclization and dehydration of residues Ala-Ser-Gly.

The protein localises to the cytoplasm. The catalysed reaction is L-histidine = trans-urocanate + NH4(+). The protein operates within amino-acid degradation; L-histidine degradation into L-glutamate; N-formimidoyl-L-glutamate from L-histidine: step 1/3. The protein is Histidine ammonia-lyase of Burkholderia vietnamiensis (strain G4 / LMG 22486) (Burkholderia cepacia (strain R1808)).